A 185-amino-acid polypeptide reads, in one-letter code: Ribosome-recycling factor (185 aa).

The protein belongs to the RRF family.

The protein resides in the cytoplasm. Its function is as follows. Responsible for the release of ribosomes from messenger RNA at the termination of protein biosynthesis. May increase the efficiency of translation by recycling ribosomes from one round of translation to another. The protein is Ribosome-recycling factor of Listeria welshimeri serovar 6b (strain ATCC 35897 / DSM 20650 / CCUG 15529 / CIP 8149 / NCTC 11857 / SLCC 5334 / V8).